The chain runs to 408 residues: Peptidase T (408 aa).

His-78 serves as a coordination point for Zn(2+). Asp-80 is an active-site residue. Residue Asp-140 coordinates Zn(2+). Catalysis depends on Glu-173, which acts as the Proton acceptor. Zn(2+)-binding residues include Glu-174, Asp-196, and His-379.

This sequence belongs to the peptidase M20B family. Requires Zn(2+) as cofactor.

The protein localises to the cytoplasm. It catalyses the reaction Release of the N-terminal residue from a tripeptide.. Its function is as follows. Cleaves the N-terminal amino acid of tripeptides. This is Peptidase T from Escherichia fergusonii (strain ATCC 35469 / DSM 13698 / CCUG 18766 / IAM 14443 / JCM 21226 / LMG 7866 / NBRC 102419 / NCTC 12128 / CDC 0568-73).